We begin with the raw amino-acid sequence, 125 residues long: Large ribosomal subunit protein bL12 (125 aa).

It belongs to the bacterial ribosomal protein bL12 family. Homodimer. Part of the ribosomal stalk of the 50S ribosomal subunit. Forms a multimeric L10(L12)X complex, where L10 forms an elongated spine to which 2 to 4 L12 dimers bind in a sequential fashion. Binds GTP-bound translation factors.

Forms part of the ribosomal stalk which helps the ribosome interact with GTP-bound translation factors. Is thus essential for accurate translation. The protein is Large ribosomal subunit protein bL12 of Gluconacetobacter diazotrophicus (strain ATCC 49037 / DSM 5601 / CCUG 37298 / CIP 103539 / LMG 7603 / PAl5).